Consider the following 133-residue polypeptide: Large ribosomal subunit protein uL15 (133 aa).

Residues 1–64 (MGLENLKPAK…QPLQRRLPKI (64 aa)) form a disordered region.

Belongs to the universal ribosomal protein uL15 family. As to quaternary structure, part of the 50S ribosomal subunit.

Its function is as follows. Binds to the 23S rRNA. This is Large ribosomal subunit protein uL15 from Helicobacter pylori (strain Shi470).